The following is a 160-amino-acid chain: General odorant-binding protein 2 (160 aa).

Residues 1–19 (MGYKLLLMYIAIVIDSVIG) form the signal peptide. Disulfide bonds link Cys-38-Cys-73, Cys-69-Cys-127, and Cys-116-Cys-136.

The protein belongs to the PBP/GOBP family. In terms of tissue distribution, antenna.

Its function is as follows. Present in the aqueous fluid surrounding olfactory sensory dendrites and are thought to aid in the capture and transport of hydrophobic odorants into and through this fluid. The chain is General odorant-binding protein 2 from Antheraea pernyi (Chinese oak silk moth).